Reading from the N-terminus, the 372-residue chain is Queuine tRNA-ribosyltransferase (372 aa).

The Proton acceptor role is filled by Asp92. Substrate is bound by residues 92–96 (DSGGF), Asp146, Gln188, and Gly215. Residues 246–252 (GIGTLRE) are RNA binding. Asp265 functions as the Nucleophile in the catalytic mechanism. The tract at residues 270-274 (TRLGR) is RNA binding; important for wobble base 34 recognition. Cys303, Cys305, Cys308, and His334 together coordinate Zn(2+).

The protein belongs to the queuine tRNA-ribosyltransferase family. As to quaternary structure, homodimer. Within each dimer, one monomer is responsible for RNA recognition and catalysis, while the other monomer binds to the replacement base PreQ1. Requires Zn(2+) as cofactor.

It carries out the reaction 7-aminomethyl-7-carbaguanine + guanosine(34) in tRNA = 7-aminomethyl-7-carbaguanosine(34) in tRNA + guanine. Its pathway is tRNA modification; tRNA-queuosine biosynthesis. Functionally, catalyzes the base-exchange of a guanine (G) residue with the queuine precursor 7-aminomethyl-7-deazaguanine (PreQ1) at position 34 (anticodon wobble position) in tRNAs with GU(N) anticodons (tRNA-Asp, -Asn, -His and -Tyr). Catalysis occurs through a double-displacement mechanism. The nucleophile active site attacks the C1' of nucleotide 34 to detach the guanine base from the RNA, forming a covalent enzyme-RNA intermediate. The proton acceptor active site deprotonates the incoming PreQ1, allowing a nucleophilic attack on the C1' of the ribose to form the product. After dissociation, two additional enzymatic reactions on the tRNA convert PreQ1 to queuine (Q), resulting in the hypermodified nucleoside queuosine (7-(((4,5-cis-dihydroxy-2-cyclopenten-1-yl)amino)methyl)-7-deazaguanosine). In Synechococcus sp. (strain CC9902), this protein is Queuine tRNA-ribosyltransferase.